The following is a 375-amino-acid chain: tRNA-specific 2-thiouridylase MnmA (375 aa).

Residues 9–16 (AMSGGVDS) and leucine 35 contribute to the ATP site. Cysteine 105 serves as the catalytic Nucleophile. An intrachain disulfide couples cysteine 105 to cysteine 201. Glycine 129 contacts ATP. Positions 151-153 (KNQ) are interaction with tRNA. Residue cysteine 201 is the Cysteine persulfide intermediate of the active site. Residues 307 to 308 (RY) form an interaction with tRNA region.

Belongs to the MnmA/TRMU family.

Its subcellular location is the cytoplasm. The enzyme catalyses S-sulfanyl-L-cysteinyl-[protein] + uridine(34) in tRNA + AH2 + ATP = 2-thiouridine(34) in tRNA + L-cysteinyl-[protein] + A + AMP + diphosphate + H(+). Functionally, catalyzes the 2-thiolation of uridine at the wobble position (U34) of tRNA, leading to the formation of s(2)U34. In Leptospira interrogans serogroup Icterohaemorrhagiae serovar copenhageni (strain Fiocruz L1-130), this protein is tRNA-specific 2-thiouridylase MnmA.